We begin with the raw amino-acid sequence, 151 residues long: D-aminoacyl-tRNA deacylase (151 aa).

A Gly-cisPro motif, important for rejection of L-amino acids motif is present at residues 137 to 138 (GP).

It belongs to the DTD family. Homodimer.

The protein resides in the cytoplasm. It carries out the reaction glycyl-tRNA(Ala) + H2O = tRNA(Ala) + glycine + H(+). The catalysed reaction is a D-aminoacyl-tRNA + H2O = a tRNA + a D-alpha-amino acid + H(+). Its function is as follows. An aminoacyl-tRNA editing enzyme that deacylates mischarged D-aminoacyl-tRNAs. Also deacylates mischarged glycyl-tRNA(Ala), protecting cells against glycine mischarging by AlaRS. Acts via tRNA-based rather than protein-based catalysis; rejects L-amino acids rather than detecting D-amino acids in the active site. By recycling D-aminoacyl-tRNA to D-amino acids and free tRNA molecules, this enzyme counteracts the toxicity associated with the formation of D-aminoacyl-tRNA entities in vivo and helps enforce protein L-homochirality. The protein is D-aminoacyl-tRNA deacylase of Fusobacterium nucleatum subsp. nucleatum (strain ATCC 25586 / DSM 15643 / BCRC 10681 / CIP 101130 / JCM 8532 / KCTC 2640 / LMG 13131 / VPI 4355).